The chain runs to 360 residues: Phosphoserine aminotransferase (360 aa).

Position 41 (Arg41) interacts with L-glutamate. Pyridoxal 5'-phosphate contacts are provided by Trp101, Thr152, Asp172, and Gln195. Lys196 carries the post-translational modification N6-(pyridoxal phosphate)lysine. 237–238 (NT) provides a ligand contact to pyridoxal 5'-phosphate.

Belongs to the class-V pyridoxal-phosphate-dependent aminotransferase family. SerC subfamily. In terms of assembly, homodimer. Requires pyridoxal 5'-phosphate as cofactor.

The protein localises to the cytoplasm. The catalysed reaction is O-phospho-L-serine + 2-oxoglutarate = 3-phosphooxypyruvate + L-glutamate. It catalyses the reaction 4-(phosphooxy)-L-threonine + 2-oxoglutarate = (R)-3-hydroxy-2-oxo-4-phosphooxybutanoate + L-glutamate. Its pathway is amino-acid biosynthesis; L-serine biosynthesis; L-serine from 3-phospho-D-glycerate: step 2/3. The protein operates within cofactor biosynthesis; pyridoxine 5'-phosphate biosynthesis; pyridoxine 5'-phosphate from D-erythrose 4-phosphate: step 3/5. Its function is as follows. Catalyzes the reversible conversion of 3-phosphohydroxypyruvate to phosphoserine and of 3-hydroxy-2-oxo-4-phosphonooxybutanoate to phosphohydroxythreonine. The sequence is that of Phosphoserine aminotransferase from Burkholderia orbicola (strain MC0-3).